The chain runs to 785 residues: ATP-dependent 6-phosphofructokinase 1 (785 aa).

Residues 1–389 (MATTHAPAEP…YHFAYKNTAT (389 aa)) are N-terminal catalytic PFK domain 1. Residues Gly23, 86 to 87 (RS), and 116 to 119 (GDGS) contribute to the ATP site. Mg(2+) is bound at residue Asp117. Substrate-binding positions include 162-164 (SID), Arg199, 206-208 (MGR), Glu263, Arg291, and 297-300 (HTQR). Asp164 serves as the catalytic Proton acceptor. Residues 390 to 403 (PDHPKLILPENKRM) form an interdomain linker region. The interval 404–785 (RIAIIHVGAP…KTGWSCYENC (382 aa)) is C-terminal regulatory PFK domain 2. Residues Arg480, 537-541 (TISNN), Arg575, 582-584 (QGG), Glu642, Arg668, 674-677 (HFQQ), and Arg749 contribute to the beta-D-fructose 2,6-bisphosphate site.

Belongs to the phosphofructokinase type A (PFKA) family. ATP-dependent PFK group I subfamily. Eukaryotic two domain clade 'E' sub-subfamily. As to quaternary structure, homotetramer. Mg(2+) serves as cofactor.

The protein resides in the cytoplasm. It catalyses the reaction beta-D-fructose 6-phosphate + ATP = beta-D-fructose 1,6-bisphosphate + ADP + H(+). The protein operates within carbohydrate degradation; glycolysis; D-glyceraldehyde 3-phosphate and glycerone phosphate from D-glucose: step 3/4. Allosterically activated by ADP, AMP, or fructose 2,6-bisphosphate, and allosterically inhibited by ATP or citrate. Functionally, catalyzes the phosphorylation of D-fructose 6-phosphate to fructose 1,6-bisphosphate by ATP, the first committing step of glycolysis. The chain is ATP-dependent 6-phosphofructokinase 1 (pfkA) from Aspergillus oryzae (strain ATCC 42149 / RIB 40) (Yellow koji mold).